We begin with the raw amino-acid sequence, 569 residues long: Urease subunit alpha (569 aa).

A Urease domain is found at 131–569; it reads GAIDSHIHFI…LPLAQRYLLL (439 aa). Residues His-136, His-138, and Lys-219 each coordinate Ni(2+). N6-carboxylysine is present on Lys-219. His-221 contributes to the substrate binding site. His-248 and His-274 together coordinate Ni(2+). The active-site Proton donor is His-322. A Ni(2+)-binding site is contributed by Asp-362.

The protein belongs to the metallo-dependent hydrolases superfamily. Urease alpha subunit family. As to quaternary structure, heterotrimer of UreA (gamma), UreB (beta) and UreC (alpha) subunits. Three heterotrimers associate to form the active enzyme. Requires Ni cation as cofactor. Post-translationally, carboxylation allows a single lysine to coordinate two nickel ions.

The protein resides in the cytoplasm. It catalyses the reaction urea + 2 H2O + H(+) = hydrogencarbonate + 2 NH4(+). It participates in nitrogen metabolism; urea degradation; CO(2) and NH(3) from urea (urease route): step 1/1. This Prochlorococcus marinus (strain NATL2A) protein is Urease subunit alpha.